The primary structure comprises 316 residues: uncharacterized protein (316 aa).

A helical transmembrane segment spans residues 12–34; it reads RWVCLTSVILFCFCIAVMRYGGV.

It localises to the membrane. This is an uncharacterized protein from Treponema pallidum (strain Nichols).